Reading from the N-terminus, the 450-residue chain is UDP-N-acetylmuramoylalanine--D-glutamate ligase (450 aa).

112 to 118 contributes to the ATP binding site; the sequence is GSNGKTT.

It belongs to the MurCDEF family.

It localises to the cytoplasm. The enzyme catalyses UDP-N-acetyl-alpha-D-muramoyl-L-alanine + D-glutamate + ATP = UDP-N-acetyl-alpha-D-muramoyl-L-alanyl-D-glutamate + ADP + phosphate + H(+). Its pathway is cell wall biogenesis; peptidoglycan biosynthesis. Functionally, cell wall formation. Catalyzes the addition of glutamate to the nucleotide precursor UDP-N-acetylmuramoyl-L-alanine (UMA). The sequence is that of UDP-N-acetylmuramoylalanine--D-glutamate ligase from Cytophaga hutchinsonii (strain ATCC 33406 / DSM 1761 / CIP 103989 / NBRC 15051 / NCIMB 9469 / D465).